The chain runs to 45 residues: Photosystem II reaction center protein K (45 aa).

The propeptide occupies 1 to 8; that stretch reads MELAMLLA. A helical transmembrane segment spans residues 24-44; it reads LPVIPVFFLLLAFVWQAAVGF.

This sequence belongs to the PsbK family. PSII is composed of 1 copy each of membrane proteins PsbA, PsbB, PsbC, PsbD, PsbE, PsbF, PsbH, PsbI, PsbJ, PsbK, PsbL, PsbM, PsbT, PsbX, PsbY, PsbZ, Psb30/Ycf12, peripheral proteins PsbO, CyanoQ (PsbQ), PsbU, PsbV and a large number of cofactors. It forms dimeric complexes.

The protein localises to the cellular thylakoid membrane. One of the components of the core complex of photosystem II (PSII). PSII is a light-driven water:plastoquinone oxidoreductase that uses light energy to abstract electrons from H(2)O, generating O(2) and a proton gradient subsequently used for ATP formation. It consists of a core antenna complex that captures photons, and an electron transfer chain that converts photonic excitation into a charge separation. In Trichodesmium erythraeum (strain IMS101), this protein is Photosystem II reaction center protein K.